The chain runs to 409 residues: Pentatricopeptide repeat-containing protein At5g09450, mitochondrial (409 aa).

Residues 1-38 (MATRSLFHSLRCRLTNNGVLGSNFIRNAESSRFSKSYN) constitute a mitochondrion transit peptide. PPR repeat units follow at residues 155–189 (TAETYTSLLHAYAASKQTERAEALFKRIIESDSLT), 191–225 (GAITYNEMMTLYMSVGQVEKVPEVIEVLKQKKVSP), 226–256 (DIFTYNLWLSSCAATFNIDELRKILEEMRHD), 262–296 (GWVRYIDLTSIYINSSRVTNAESTLPVEAEKSISQ), 298–332 (EWITYDFLMILHTGLGNKVMIDQIWKSLRNTNQIL), and 333–367 (SSRSYICVLSSYLMLGHLREAEEIIHQWKESKTTE).

Belongs to the PPR family. P subfamily.

It is found in the mitochondrion. The chain is Pentatricopeptide repeat-containing protein At5g09450, mitochondrial from Arabidopsis thaliana (Mouse-ear cress).